We begin with the raw amino-acid sequence, 285 residues long: Protease HtpX homolog (285 aa).

Transmembrane regions (helical) follow at residues 7-27 and 30-50; these read TAMLMAAITALFIVIGGMIGG and GMTIALLFALGMNFFSYWFSD. His131 serves as a coordination point for Zn(2+). Residue Glu132 is part of the active site. Position 135 (His135) interacts with Zn(2+). 2 helical membrane-spanning segments follow: residues 146–166 and 177–197; these read ITATMAGAISAIANFAMFFGG and IAGIAVALLAPIAGALIQMAI. Position 202 (Glu202) interacts with Zn(2+).

Belongs to the peptidase M48B family. The cofactor is Zn(2+).

The protein resides in the cell inner membrane. In Burkholderia multivorans (strain ATCC 17616 / 249), this protein is Protease HtpX homolog.